We begin with the raw amino-acid sequence, 420 residues long: Histidine--tRNA ligase (420 aa).

The protein belongs to the class-II aminoacyl-tRNA synthetase family. As to quaternary structure, homodimer.

It is found in the cytoplasm. It catalyses the reaction tRNA(His) + L-histidine + ATP = L-histidyl-tRNA(His) + AMP + diphosphate + H(+). The chain is Histidine--tRNA ligase from Acholeplasma laidlawii (strain PG-8A).